The sequence spans 526 residues: Peptide chain release factor 3 (526 aa).

Residues 8 to 277 (GKRRTFAIIS…GLTDWAPAPQ (270 aa)) form the tr-type G domain. GTP contacts are provided by residues 17–24 (SHPDAGKT), 85–89 (DTPGH), and 139–142 (NKLD).

It belongs to the TRAFAC class translation factor GTPase superfamily. Classic translation factor GTPase family. PrfC subfamily.

The protein localises to the cytoplasm. Increases the formation of ribosomal termination complexes and stimulates activities of RF-1 and RF-2. It binds guanine nucleotides and has strong preference for UGA stop codons. It may interact directly with the ribosome. The stimulation of RF-1 and RF-2 is significantly reduced by GTP and GDP, but not by GMP. The polypeptide is Peptide chain release factor 3 (Aliivibrio fischeri (strain ATCC 700601 / ES114) (Vibrio fischeri)).